Here is a 309-residue protein sequence, read N- to C-terminus: MPIRVPDELPAVNFLRNENVFVMTSSRAKTQEIRPLKVLVLNLMPKKIETENQFLRLLSNSPLQIDIQLLRIDSRESKNTPAEHLNNFYCDFDDIQNDNFDGLIVTGAPLGLVDFCDVVYWPQIARVIEWAKEHVTSTLFVCWAVQAALNILYGIPKMTRKEKLSGVYSHQTLQPHALLTRGFDETFLAPHSRYADFPVDVIRQYTDLDILVESEQAGAYLFASKDKRLAFVTGHPEYDALTLAGEFFRDYDAGLDPAVPVNYFPDDNPELAPKASWRSHGHLLFVNWLNYYVYQITPYDLRRMNPTLD.

Catalysis depends on cysteine 142, which acts as the Acyl-thioester intermediate. Lysine 163 and serine 192 together coordinate substrate. Histidine 235 serves as the catalytic Proton acceptor. Residue glutamate 237 is part of the active site. Arginine 249 contributes to the substrate binding site.

It belongs to the MetA family.

Its subcellular location is the cytoplasm. The enzyme catalyses L-homoserine + succinyl-CoA = O-succinyl-L-homoserine + CoA. It functions in the pathway amino-acid biosynthesis; L-methionine biosynthesis via de novo pathway; O-succinyl-L-homoserine from L-homoserine: step 1/1. Transfers a succinyl group from succinyl-CoA to L-homoserine, forming succinyl-L-homoserine. The protein is Homoserine O-succinyltransferase of Pectobacterium carotovorum subsp. carotovorum (strain PC1).